Consider the following 189-residue polypeptide: Putative manganese efflux pump MntP (189 aa).

Helical transmembrane passes span 2–22, 36–56, 71–91, 106–126, 132–152, and 167–187; these read SLTELILLAIGLSMDASAVSI, ILQMAVMFAVFQGIMPLIGYY, WIAFILLVIIGGKMIHESITA, LLLVQAVATSIDALAVGVSLS, ILYSITIIGIVTFICCTAAIL, and IVGGLILVGIGVKIFVQHMFF.

The protein belongs to the MntP (TC 9.B.29) family.

The protein localises to the cell membrane. Functionally, probably functions as a manganese efflux pump. The protein is Putative manganese efflux pump MntP of Ruminiclostridium cellulolyticum (strain ATCC 35319 / DSM 5812 / JCM 6584 / H10) (Clostridium cellulolyticum).